The chain runs to 38 residues: AQTVEVKMGADGGLLVFEPAKAGPHNVVFDEDNIPPGV.

Positions 1–38 (AQTVEVKMGADGGLLVFEPAKAGPHNVVFDEDNIPPGV) constitute a Plastocyanin-like domain. His25 serves as a coordination point for Cu cation.

Belongs to the plastocyanin family. Cu(2+) is required as a cofactor.

The protein localises to the plastid. The protein resides in the chloroplast thylakoid membrane. Functionally, participates in electron transfer between P700 and the cytochrome b6-f complex in photosystem I. The protein is Plastocyanin (PETE) of Thalassiosira oceanica (Marine diatom).